We begin with the raw amino-acid sequence, 179 residues long: DELTA-actitoxin-Afr1e (179 aa).

The interval 1–29 (SADVAGAVIDGAGLGFDVLKTVLEALGNV) is N-terminal alpha-helix that contributes to the pore. Positions 11 to 30 (GAGLGFDVLKTVLEALGNVK) are N-terminal region. Arg-31 contacts an N-(acyl)-sphingosylphosphocholine. The N-acetyl-D-glucosamine 6-sulfate site is built by Tyr-51 and Arg-53. Residues Arg-53, Ser-54, Arg-79, Gly-85, Tyr-108, Tyr-113, Ser-114, Trp-116, Tyr-133, Tyr-137, Tyr-138, Arg-144, and Gly-168 each contribute to the an N-(acyl)-sphingosylphosphocholine site. Positions 105–120 (SVPYDYNWYSNWWNVR) are trp-rich region, which is important for the binding to lipid membrane. An N-acetyl-D-glucosamine 6-sulfate-binding site is contributed by Tyr-138. A Cell attachment site, crucial for protein stability motif is present at residues 144 to 146 (RGD).

It belongs to the actinoporin family. Sea anemone subfamily. Octamer or nonamer in membranes. Monomer in the soluble state.

The protein localises to the secreted. The protein resides in the nematocyst. It localises to the target cell membrane. Pore-forming toxin (PFT) that consists of a crown-shaped octamer or nonamer that forms cation-selective hydrophilic pores of about 1.5 nm (inside) and 13 nm (outside) and causes cytolysis. It causes cardiac stimulation. Also causes hemolysis (HC(50)=1.6 nM). Interestingly, the Phe-16 is crucial for hemolysis. Pore formation is a multi-step process that involves specific recognition of membrane sphingomyelin (but neither cholesterol nor phosphatidylcholine) using aromatic rich region and adjacent phosphocholine (POC) binding site, firm binding to the membrane (mainly driven by hydrophobic interactions) accompanied by the transfer of the N-terminal region to the lipid-water interface and finally pore formation after oligomerization of monomers. It is probable that a dimeric form is an assembly intermediate before the complete oligomerization. The formation of stable pores occurs only in vesicles composed of DOPC/SM (there is no oligomerization when the PFT is treated with vesicles of DOPC or SM alone). The transmembrane pore displays 8 lateral perforations, one at each subunit-subunit interface, partially occupied by the acyl-chain region of a bridging lipid. Each pore contains 24 lipid molecules, firmly bound to each subunit, that is, 3 lipids (L1, L2, L3, L4 and/or L5) are associated to each subunit. Lipid L1 bridges 2 subunits, whereas lipids L2 and L3 bind to sites at single subunit. In Actinia fragacea (Strawberry anemone), this protein is DELTA-actitoxin-Afr1e.